Reading from the N-terminus, the 1086-residue chain is NAD(P) transhydrogenase, mitochondrial (1086 aa).

The N-terminal 43 residues, 1–43, are a transit peptide targeting the mitochondrion; that stretch reads MAHLLKTVVAGCSCPFLSNLGSSKVLPGKRDFVRTLRTHQALW. Residues 44 to 474 are Mitochondrial matrix-facing; the sequence is CKSPVKPGIP…TVSMYTKTLT (431 aa). K70 carries the N6-acetyllysine modification. At K117 the chain carries N6-succinyllysine. 182-184 is an NAD(+) binding site; that stretch reads RVT. K224 is modified (N6-succinyllysine). Residues V237, 257–259, and G287 contribute to the NAD(+) site; that span reads DTR. An N6-succinyllysine modification is found at K294. Residues E300 and L319 each contribute to the NAD(+) site. Position 331 is an N6-succinyllysine (K331). K397 carries the N6-acetyllysine modification. Helical transmembrane passes span 475-493, 501-521, 527-546, and 558-578; these read TASV…GIVA, MVTT…GVTP, LMSV…LALM, and SLAA…FLVT. The Mitochondrial matrix segment spans residues 579-595; it reads QRMLDMFKRPTDPPEYN. 5 helical membrane passes run 596–616, 622–642, 646–666, 672–691, and 702–722; these read YLYL…LYGG, IMYL…STQG, LGNA…LGGL, LLAQ…LTIA, and LVAA…MAEY. At 723–739 the chain is on the cytoplasmic side; the sequence is IVEYPHFAMDATSNFTK. 5 consecutive transmembrane segments (helical) span residues 740–760, 778–797, 801–819, 833–853, and 857–879; these read IVAY…LVAY, HALN…PFMA, FTTG…TLMG, VVIT…GFLL, and LLTI…MCVA. The Mitochondrial matrix segment spans residues 880-1086; sequence MNRSLANVIL…QAKVRESYQK (207 aa). Residues Y933, 965–970, 1007–1011, 1026–1027, 1042–1049, and 1068–1069 each bind NADP(+); these read VAGRMP, GANDT, GM, KRSLGVGY, and DA. At K1079 the chain carries N6-succinyllysine.

It in the N-terminal section; belongs to the AlaDH/PNT family. In the C-terminal section; belongs to the PNT beta subunit family. As to quaternary structure, homodimer. In terms of tissue distribution, widely expressed with expression most readily detectable in adrenal, heart, kidney, thyroid and adipose tissues.

Its subcellular location is the mitochondrion inner membrane. The catalysed reaction is NAD(+) + NADPH + H(+)(in) = NADH + NADP(+) + H(+)(out). The transhydrogenation between NADH and NADP is coupled to respiration and ATP hydrolysis and functions as a proton pump across the membrane. May play a role in reactive oxygen species (ROS) detoxification in the adrenal gland. This is NAD(P) transhydrogenase, mitochondrial (Nnt) from Mus musculus (Mouse).